The chain runs to 1633 residues: D-lysergyl-peptide-synthetase subunit 3 (1633 aa).

Residues Phe-80–Arg-483 are adenylation (A) domain. Residues Glu-622 to Ser-691 form the Carrier domain. O-(pantetheine 4'-phosphoryl)serine is present on Ser-654. Residues Pro-836–Ala-1127 are condensation (C) domain. The reductase (R) domain stretch occupies residues Val-1256–Trp-1483.

The protein belongs to the NRP synthetase family.

It participates in alkaloid biosynthesis; ergot alkaloid biosynthesis. Its function is as follows. D-lysergyl-peptide-synthetase subunit 3; part of the gene cluster that mediates the biosynthesis of fungal ergot alkaloid. DmaW catalyzes the first step of ergot alkaloid biosynthesis by condensing dimethylallyl diphosphate (DMAP) and tryptophan to form 4-dimethylallyl-L-tryptophan. The second step is catalyzed by the methyltransferase easF that methylates 4-dimethylallyl-L-tryptophan in the presence of S-adenosyl-L-methionine, resulting in the formation of 4-dimethylallyl-L-abrine. The catalase easC and the FAD-dependent oxidoreductase easE then transform 4-dimethylallyl-L-abrine to chanoclavine-I which is further oxidized by easD in the presence of NAD(+), resulting in the formation of chanoclavine-I aldehyde. Agroclavine dehydrogenase easG then mediates the conversion of chanoclavine-I aldehyde to agroclavine via a non-enzymatic adduct reaction: the substrate is an iminium intermediate that is formed spontaneously from chanoclavine-I aldehyde in the presence of glutathione. The presence of easA is not required to complete this reaction. Further conversion of agroclavine to paspalic acid is a two-step process involving oxidation of agroclavine to elymoclavine and of elymoclavine to paspalic acid, the second step being performed by the elymoclavine oxidase cloA. Paspalic acid is then further converted to D-lysergic acid. Ergopeptines are assembled from D-lysergic acid and three different amino acids by the D-lysergyl-peptide-synthetases composed each of a monomudular and a trimodular nonribosomal peptide synthetase subunit. LpsB and lpsC encode the monomodular subunits responsible for D-lysergic acid activation and incorporation into the ergopeptine backbone. LpsA1 and A2 subunits encode the trimodular nonribosomal peptide synthetase assembling the tripeptide portion of ergopeptines. LpsA1 is responsible for formation of the major ergopeptine, ergotamine, and lpsA2 for alpha-ergocryptine, the minor ergopeptine of the total alkaloid mixture elaborated by C.purpurea. D-lysergyl-tripeptides are assembled by the nonribosomal peptide synthetases and released as N-(D-lysergyl-aminoacyl)-lactams. Cyclolization of the D-lysergyl-tripeptides is performed by the Fe(2+)/2-ketoglutarate-dependent dioxygenase easH which introduces a hydroxyl group into N-(D-lysergyl-aminoacyl)-lactam at alpha-C of the aminoacyl residue followed by spontaneous condensation with the terminal lactam carbonyl group. The polypeptide is D-lysergyl-peptide-synthetase subunit 3 (Claviceps purpurea (Ergot fungus)).